Reading from the N-terminus, the 409-residue chain is Putative competence-damage inducible protein (409 aa).

Belongs to the CinA family.

In Clostridium botulinum (strain Loch Maree / Type A3), this protein is Putative competence-damage inducible protein.